A 338-amino-acid chain; its full sequence is Uroporphyrinogen decarboxylase (338 aa).

Residues 23–27 (RQAGR), aspartate 72, tyrosine 146, threonine 201, and histidine 312 contribute to the substrate site.

The protein belongs to the uroporphyrinogen decarboxylase family. As to quaternary structure, homodimer.

It localises to the cytoplasm. The enzyme catalyses uroporphyrinogen III + 4 H(+) = coproporphyrinogen III + 4 CO2. It functions in the pathway porphyrin-containing compound metabolism; protoporphyrin-IX biosynthesis; coproporphyrinogen-III from 5-aminolevulinate: step 4/4. Its function is as follows. Catalyzes the decarboxylation of four acetate groups of uroporphyrinogen-III to yield coproporphyrinogen-III. This chain is Uroporphyrinogen decarboxylase, found in Thermodesulfovibrio yellowstonii (strain ATCC 51303 / DSM 11347 / YP87).